We begin with the raw amino-acid sequence, 1164 residues long: DNA-directed RNA polymerase subunit beta' (1164 aa).

Zn(2+) contacts are provided by Cys-60, Cys-62, Cys-75, and Cys-78. Mg(2+)-binding residues include Asp-449, Asp-451, and Asp-453. Zn(2+)-binding residues include Cys-776, Cys-850, Cys-857, and Cys-860.

It belongs to the RNA polymerase beta' chain family. The RNAP catalytic core consists of 2 alpha, 1 beta, 1 beta' and 1 omega subunit. When a sigma factor is associated with the core the holoenzyme is formed, which can initiate transcription. It depends on Mg(2+) as a cofactor. The cofactor is Zn(2+).

It carries out the reaction RNA(n) + a ribonucleoside 5'-triphosphate = RNA(n+1) + diphosphate. Its function is as follows. DNA-dependent RNA polymerase catalyzes the transcription of DNA into RNA using the four ribonucleoside triphosphates as substrates. The chain is DNA-directed RNA polymerase subunit beta' from Moorella thermoacetica (strain ATCC 39073 / JCM 9320).